The primary structure comprises 181 residues: MFGLKQFYQNEVRIKLAQELDIKNPMLLPKLEKIVISVGAGAYAKDMKIMQNIAQTISLIAGQKAVITKAKKSVAGFKIREGMAVGAKVTLRNKRMYNFLEKLIVISLPRVKDFRGISRNGFDGRGNYTFGINEQLIFPEVVYDDIMVSHGMNITMVTSTDNDKEAFKLLELLGLPFAKVR.

Belongs to the universal ribosomal protein uL5 family. As to quaternary structure, part of the 50S ribosomal subunit; part of the 5S rRNA/L5/L18/L25 subcomplex. Contacts the 5S rRNA and the P site tRNA. Forms a bridge to the 30S subunit in the 70S ribosome.

Functionally, this is one of the proteins that bind and probably mediate the attachment of the 5S RNA into the large ribosomal subunit, where it forms part of the central protuberance. In the 70S ribosome it contacts protein S13 of the 30S subunit (bridge B1b), connecting the 2 subunits; this bridge is implicated in subunit movement. Contacts the P site tRNA; the 5S rRNA and some of its associated proteins might help stabilize positioning of ribosome-bound tRNAs. The protein is Large ribosomal subunit protein uL5 of Helicobacter pylori (strain HPAG1).